The primary structure comprises 230 residues: 5'-methylthioadenosine/S-adenosylhomocysteine nucleosidase (230 aa).

E12 functions as the Proton acceptor in the catalytic mechanism. Substrate is bound by residues G78, V152, and 173-174 (ME). D197 (proton donor) is an active-site residue.

Belongs to the PNP/UDP phosphorylase family. MtnN subfamily.

It carries out the reaction S-adenosyl-L-homocysteine + H2O = S-(5-deoxy-D-ribos-5-yl)-L-homocysteine + adenine. The enzyme catalyses S-methyl-5'-thioadenosine + H2O = 5-(methylsulfanyl)-D-ribose + adenine. The catalysed reaction is 5'-deoxyadenosine + H2O = 5-deoxy-D-ribose + adenine. Its pathway is amino-acid biosynthesis; L-methionine biosynthesis via salvage pathway; S-methyl-5-thio-alpha-D-ribose 1-phosphate from S-methyl-5'-thioadenosine (hydrolase route): step 1/2. Functionally, catalyzes the irreversible cleavage of the glycosidic bond in both 5'-methylthioadenosine (MTA) and S-adenosylhomocysteine (SAH/AdoHcy) to adenine and the corresponding thioribose, 5'-methylthioribose and S-ribosylhomocysteine, respectively. Also cleaves 5'-deoxyadenosine, a toxic by-product of radical S-adenosylmethionine (SAM) enzymes, into 5-deoxyribose and adenine. The polypeptide is 5'-methylthioadenosine/S-adenosylhomocysteine nucleosidase (Glaesserella parasuis serovar 5 (strain SH0165) (Haemophilus parasuis)).